The primary structure comprises 4303 residues: MPPAAPARLALALGLGLWLGALAGGPGRGCGPCEPPCLCGPAPGAACRVNCSGRGLRTLGPALRIPADATALDVSHNLLRALDVGLLANLSALAELDISNNKISTLEEGIFANLFNLSEINLSGNPFECDCGLAWLPRWAEEQQVRVVQPEAATCAGPGSLAGQPLLGIPLLDSGCGEEYVACLPDNSSGTVAAVSFSAAHEGLLQPEACSAFCFSTGQGLAALSEQGWCLCGAAQPSSASFACLSLCSGPPPPPAPTCRGPTLLQHVFPASPGATLVGPHGPLASGQLAAFHIAAPLPVTATRWDFGDGSAEVDAAGPAASHRYVLPGRYHVTAVLALGAGSALLGTDVQVEAAPAALELVCPSSVQSDESLDLSIQNRGGSGLEAAYSIVALGEEPARAVHPLCPSDTEIFPGNGHCYRLVVEKAAWLQAQEQCQAWAGAALAMVDSPAVQRFLVSRVTRSLDVWIGFSTVQGVEVGPAPQGEAFSLESCQNWLPGEPHPATAEHCVRLGPTGWCNTDLCSAPHSYVCELQPGGPVQDAENLLVGAPSGDLQGPLTPLAQQDGLSAPHEPVEVMVFPGLRLSREAFLTTAEFGTQELRRPAQLRLQVYRLLSTAGTPENGSEPESRSPDNRTQLAPACMPGGRWCPGANICLPLDASCHPQACANGCTSGPGLPGAPYALWREFLFSVPAGPPAQYSVTLHGQDVLMLPGDLVGLQHDAGPGALLHCSPAPGHPGPRAPYLSANASSWLPHLPAQLEGTWACPACALRLLAATEQLTVLLGLRPNPGLRLPGRYEVRAEVGNGVSRHNLSCSFDVVSPVAGLRVIYPAPRDGRLYVPTNGSALVLQVDSGANATATARWPGGSVSARFENVCPALVATFVPGCPWETNDTLFSVVALPWLSEGEHVVDVVVENSASRANLSLRVTAEEPICGLRATPSPEARVLQGVLVRYSPVVEAGSDMVFRWTINDKQSLTFQNVVFNVIYQSAAVFKLSLTASNHVSNVTVNYNVTVERMNRMQGLQVSTVPAVLSPNATLALTAGVLVDSAVEVAFLWTFGDGEQALHQFQPPYNESFPVPDPSVAQVLVEHNVMHTYAAPGEYLLTVLASNAFENLTQQVPVSVRASLPSVAVGVSDGVLVAGRPVTFYPHPLPSPGGVLYTWDFGDGSPVLTQSQPAANHTYASRGTYHVRLEVNNTVSGAAAQADVRVFEELRGLSVDMSLAVEQGAPVVVSAAVQTGDNITWTFDMGDGTVLSGPEATVEHVYLRAQNCTVTVGAASPAGHLARSLHVLVFVLEVLRVEPAACIPTQPDARLTAYVTGNPAHYLFDWTFGDGSSNTTVRGCPTVTHNFTRSGTFPLALVLSSRVNRAHYFTSICVEPEVGNVTLQPERQFVQLGDEAWLVACAWPPFPYRYTWDFGTEEAAPTRARGPEVTFIYRDPGSYLVTVTASNNISAANDSALVEVQEPVLVTSIKVNGSLGLELQQPYLFSAVGRGRPASYLWDLGDGGWLEGPEVTHAYNSTGDFTVRVAGWNEVSRSEAWLNVTVKRRVRGLVVNASRTVVPLNGSVSFSTSLEAGSDVRYSWVLCDRCTPIPGGPTISYTFRSVGTFNIIVTAENEVGSAQDSIFVYVLQLIEGLQVVGGGRYFPTNHTVQLQAVVRDGTNVSYSWTAWRDRGPALAGSGKGFSLTVLEAGTYHVQLRATNMLGSAWADCTMDFVEPVGWLMVAASPNPAAVNTSVTLSAELAGGSGVVYTWSLEEGLSWETSEPFTTHSFPTPGLHLVTMTAGNPLGSANATVEVDVQVPVSGLSIRASEPGGSFVAAGSSVPFWGQLATGTNVSWCWAVPGGSSKRGPHVTMVFPDAGTFSIRLNASNAVSWVSATYNLTAEEPIVGLVLWASSKVVAPGQLVHFQILLAAGSAVTFRLQVGGANPEVLPGPRFSHSFPRVGDHVVSVRGKNHVSWAQAQVRIVVLEAVSGLQVPNCCEPGIATGTERNFTARVQRGSRVAYAWYFSLQKVQGDSLVILSGRDVTYTPVAAGLLEIQVRAFNALGSENRTLVLEVQDAVQYVALQSGPCFTNRSAQFEAATSPSPRRVAYHWDFGDGSPGQDTDEPRAEHSYLRPGDYRVQVNASNLVSFFVAQATVTVQVLACREPEVDVVLPLQVLMRRSQRNYLEAHVDLRDCVTYQTEYRWEVYRTASCQRPGRPARVALPGVDVSRPRLVLPRLALPVGHYCFVFVVSFGDTPLTQSIQANVTVAPERLVPIIEGGSYRVWSDTRDLVLDGSESYDPNLEDGDQTPLSFHWACVASTQREAGGCALNFGPRGSSTVTIPRERLAAGVEYTFSLTVWKAGRKEEATNQTVLIRSGRVPIVSLECVSCKAQAVYEVSRSSYVYLEGRCLNCSSGSKRGRWAARTFSNKTLVLDETTTSTGSAGMRLVLRRGVLRDGEGYTFTLTVLGRSGEEEGCASIRLSPNRPPLGGSCRLFPLGAVHALTTKVHFECTGWHDAEDAGAPLVYALLLRRCRQGHCEEFCVYKGSLSSYGAVLPPGFRPHFEVGLAVVVQDQLGAAVVALNRSLAITLPEPNGSATGLTVWLHGLTASVLPGLLRQADPQHVIEYSLALVTVLNEYERALDVAAEPKHERQHRAQIRKNITETLVSLRVHTVDDIQQIAAALAQCMGPSRELVCRSCLKQTLHKLEAMMLILQAETTAGTVTPTAIGDSILNITGDLIHLASSDVRAPQPSELGAESPSRMVASQAYNLTSALMRILMRSRVLNEEPLTLAGEEIVAQGKRSDPRSLLCYGGAPGPGCHFSIPEAFSGALANLSDVVQLIFLVDSNPFPFGYISNYTVSTKVASMAFQTQAGAQIPIERLASERAITVKVPNNSDWAARGHRSSANSANSVVVQPQASVGAVVTLDSSNPAAGLHLQLNYTLLDGHYLSEEPEPYLAVYLHSEPRPNEHNCSASRRIRPESLQGADHRPYTFFISPGSRDPAGSYHLNLSSHFRWSALQVSVGLYTSLCQYFSEEDMVWRTEGLLPLEETSPRQAVCLTRHLTAFGASLFVPPSHVRFVFPEPTADVNYIVMLTCAVCLVTYMVMAAILHKLDQLDASRGRAIPFCGQRGRFKYEILVKTGWGRGSGTTAHVGIMLYGVDSRSGHRHLDGDRAFHRNSLDIFRIATPHSLGSVWKIRVWHDNKGLSPAWFLQHVIVRDLQTARSAFFLVNDWLSVETEANGGLVEKEVLAASDAALLRFRRLLVAELQRGFFDKHIWLSIWDRPPRSRFTRIQRATCCVLLICLFLGANAVWYGAVGDSAYSTGHVSRLSPLSVDTVAVGLVSSVVVYPVYLAILFLFRMSRSKVAGSPSPTPAGQQVLDIDSCLDSSVLDSSFLTFSGLHAEQAFVGQMKSDLFLDDSKSLVCWPSGEGTLSWPDLLSDPSIVGSNLRQLARGQAGHGLGPEEDGFSLASPYSPAKSFSASDEDLIQQVLAEGVSSPAPTQDTHMETDLLSSLSSTPGEKTETLALQRLGELGPPSPGLNWEQPQAARLSRTGLVEGLRKRLLPAWCASLAHGLSLLLVAVAVAVSGWVGASFPPGVSVAWLLSSSASFLASFLGWEPLKVLLEALYFSLVAKRLHPDEDDTLVESPAVTPVSARVPRVRPPHGFALFLAKEEARKVKRLHGMLRSLLVYMLFLLVTLLASYGDASCHGHAYRLQSAIKQELHSRAFLAITRSEELWPWMAHVLLPYVHGNQSSPELGPPRLRQVRLQEALYPDPPGPRVHTCSAAGGFSTSDYDVGWESPHNGSGTWAYSAPDLLGAWSWGSCAVYDSGGYVQELGLSLEESRDRLRFLQLHNWLDNRSRAVFLELTRYSPAVGLHAAVTLRLEFPAAGRALAALSVRPFALRRLSAGLSLPLLTSVCLLLFAVHFAVAEARTWHREGRWRVLRLGAWARWLLVALTAATALVRLAQLGAADRQWTRFVRGRPRRFTSFDQVAQLSSAARGLAASLLFLLLVKAAQQLRFVRQWSVFGKTLCRALPELLGVTLGLVVLGVAYAQLAILLVSSCVDSLWSVAQALLVLCPGTGLSTLCPAESWHLSPLLCVGLWALRLWGALRLGAVILRWRYHALRGELYRPAWEPQDYEMVELFLRRLRLWMGLSKVKEFRHKVRFEGMEPLPSRSSRGSKVSPDVPPPSAGSDASHPSTSSSQLDGLSVSLGRLGTRCEPEPSRLQAVFEALLTQFDRLNQATEDVYQLEQQLHSLQGRRSSRAPAGSSRGPSPGLRPALPSRLARASRGVDLATGPSRTPLRAKNKVHPSST.

Positions 1–23 (MPPAAPARLALALGLGLWLGALA) are cleaved as a signal peptide. The LRRNT domain maps to 24-67 (GGPGRGCGPCEPPCLCGPAPGAACRVNCSGRGLRTLGPALRIPA). Over 24–3074 (GGPGRGCGPC…VFPEPTADVN (3051 aa)) the chain is Extracellular. Asn-50 and Asn-89 each carry an N-linked (GlcNAc...) asparagine glycan. 2 LRR repeats span residues 68-91 (DATA…ANLS) and 92-113 (ALAE…IFAN). Residues Asn-116 and Asn-121 are each glycosylated (N-linked (GlcNAc...) asparagine). Positions 125–178 (NPFECDCGLAWLPRWAEEQQVRVVQPEAATCAGPGSLAGQPLLGIPLLDSGCGE) constitute an LRRCT domain. Residues 177 to 271 (GEEYVACLPD…PTLLQHVFPA (95 aa)) form the WSC domain. An N-linked (GlcNAc...) asparagine glycan is attached at Asn-187. The PKD 1 domain maps to 272-359 (SPGATLVGPH…VQVEAAPAAL (88 aa)). Positions 415–531 (GNGHCYRLVV…CSAPHSYVCE (117 aa)) constitute a C-type lectin domain. Cystine bridges form between Cys-436-Cys-530 and Cys-508-Cys-522. The disordered stretch occupies residues 616–635 (AGTPENGSEPESRSPDNRTQ). 2 N-linked (GlcNAc...) asparagine glycosylation sites follow: Asn-621 and Asn-632. Residues 638–671 (PACMPGGRWCPGANICLPLDASCHPQACANGCTS) form the LDL-receptor class A; atypical domain. 3 cysteine pairs are disulfide-bonded: Cys-640-Cys-653, Cys-647-Cys-665, and Cys-660-Cys-669. A PKD 2 domain is found at 743 to 817 (LSANASSWLP…RHNLSCSFDV (75 aa)). Asn-746, Asn-810, Asn-841, Asn-854, Asn-890, Asn-921, Asn-1004, Asn-1010, Asn-1034, Asn-1072, Asn-1113, Asn-1178, Asn-1194, Asn-1240, Asn-1269, Asn-1336, Asn-1348, Asn-1382, Asn-1450, Asn-1455, Asn-1474, Asn-1518, Asn-1541, Asn-1554, Asn-1563, Asn-1647, Asn-1661, Asn-1733, Asn-1791, Asn-1834, Asn-1867, and Asn-1880 each carry an N-linked (GlcNAc...) asparagine glycan. PKD domains follow at residues 855 to 928 (ATAT…RVTA), 935 to 1020 (LRAT…NRMQ), 1023 to 1129 (QVST…LPSV), 1127 to 1215 (PSVA…LRGL), 1213 to 1298 (RGLS…EVLR), 1294 to 1383 (LEVL…VGNV), 1382 to 1469 (NVTL…VLVT), 1468 to 1551 (VTSI…VRGL), 1550 to 1635 (GLVV…IEGL), 1634 to 1721 (GLQV…VGWL), 1719 to 1805 (GWLM…VSGL), 1807 to 1890 (IRAS…IVGL), 1889 to 1974 (GLVL…VSGL), 1977 to 2057 (PNCC…VLEV), and 2060 to 2148 (AVQY…ACRE). N-linked (GlcNAc...) asparagine glycans are attached at residues Asn-1991, Asn-2050, Asn-2074, Asn-2125, Asn-2248, Asn-2353, Asn-2395, Asn-2412, Asn-2567, Asn-2578, Asn-2645, Asn-2718, Asn-2754, Asn-2841, Asn-2878, Asn-2925, Asn-2956, and Asn-2994. In terms of domain architecture, REJ spans 2146 to 2833 (CREPEVDVVL…QLIFLVDSNP (688 aa)). In terms of domain architecture, GAIN-B spans 2862–3063 (PIERLASERA…SLFVPPSHVR (202 aa)). A disulfide bridge connects residues Cys-3015 and Cys-3043. The interval 3015 to 3063 (CQYFSEEDMVWRTEGLLPLEETSPRQAVCLTRHLTAFGASLFVPPSHVR) is GPS. A helical transmembrane segment spans residues 3075–3095 (YIVMLTCAVCLVTYMVMAAIL). Residues 3096 to 3277 (HKLDQLDASR…DRPPRSRFTR (182 aa)) lie on the Cytoplasmic side of the membrane. The PLAT domain maps to 3118–3233 (FKYEILVKTG…EANGGLVEKE (116 aa)). A helical transmembrane segment spans residues 3278–3298 (IQRATCCVLLICLFLGANAVW). Over 3299–3323 (YGAVGDSAYSTGHVSRLSPLSVDTV) the chain is Extracellular. The helical transmembrane segment at 3324–3344 (AVGLVSSVVVYPVYLAILFLF) threads the bilayer. The Cytoplasmic segment spans residues 3345–3559 (RMSRSKVAGS…LPAWCASLAH (215 aa)). The helical transmembrane segment at 3560–3580 (GLSLLLVAVAVAVSGWVGASF) threads the bilayer. The Extracellular segment spans residues 3581–3582 (PP). A helical membrane pass occupies residues 3583–3603 (GVSVAWLLSSSASFLASFLGW). The Cytoplasmic segment spans residues 3604-3665 (EPLKVLLEAL…LAKEEARKVK (62 aa)). The helical transmembrane segment at 3666 to 3686 (RLHGMLRSLLVYMLFLLVTLL) threads the bilayer. The Extracellular portion of the chain corresponds to 3687–3901 (ASYGDASCHG…RLSAGLSLPL (215 aa)). N-linked (GlcNAc...) asparagine glycosylation is found at Asn-3738, Asn-3790, and Asn-3845. A helical membrane pass occupies residues 3902–3922 (LTSVCLLLFAVHFAVAEARTW). Over 3923–3935 (HREGRWRVLRLGA) the chain is Cytoplasmic. The helical transmembrane segment at 3936–3956 (WARWLLVALTAATALVRLAQL) threads the bilayer. The Extracellular segment spans residues 3957-3984 (GAADRQWTRFVRGRPRRFTSFDQVAQLS). Residues 3985-4005 (SAARGLAASLLFLLLVKAAQQ) traverse the membrane as a helical segment. At 4006 to 4027 (LRFVRQWSVFGKTLCRALPELL) the chain is on the cytoplasmic side. The helical transmembrane segment at 4028 to 4048 (GVTLGLVVLGVAYAQLAILLV) threads the bilayer. Residues 4049–4090 (SSCVDSLWSVAQALLVLCPGTGLSTLCPAESWHLSPLLCVGL) are Extracellular-facing. A helical transmembrane segment spans residues 4091–4110 (WALRLWGALRLGAVILRWRY). At 4111–4303 (HALRGELYRP…AKNKVHPSST (193 aa)) the chain is on the cytoplasmic side. 2 disordered regions span residues 4160–4196 (PLPS…QLDG) and 4243–4303 (LHSL…PSST). Ser-4166 is subject to Phosphoserine; by PRKX; in vitro. Residues 4185–4195 (SHPSTSSSQLD) show a composition bias toward polar residues. A coiled-coil region spans residues 4220-4251 (EALLTQFDRLNQATEDVYQLEQQLHSLQGRRS). Residues 4253–4269 (RAPAGSSRGPSPGLRPA) are compositionally biased toward low complexity. A compositionally biased stretch (basic residues) spans 4292–4303 (LRAKNKVHPSST).

This sequence belongs to the polycystin family. In terms of assembly, component of the heterotetrameric polycystin channel complex with PKD2; the tetramer contains one PKD1 chain and three PKD2 chains. Interacts with PKD2; the interaction is required for ciliary localization. Interacts with PKD2L1. Interacts with PRKX; involved in differentiation and controlled morphogenesis of the kidney. Interacts (via extracellular domain) with WNT3A, WNT4, WNT5A and WNT9B. Interacts with DVL1 and DVL2. Interacts with NPHP1 (via SH3 domain). Interacts with BBS1, BBS4, BBS5 and TTC8. Interacts with RGS7. Interacts (via the PKD repeats in the N-terminal extracellular region) with EPCIP; the interaction is not dependent on N-glycosylation of either protein. N-glycosylated. Post-translationally, after synthesis, undergoes cleavage between Leu-3048 and Thr-3049 in the GPS region of the GAIN-B domain. Cleavage at the GPS region occurs through a cis-autoproteolytic mechanism involving an ester-intermediate via N-O acyl rearrangement. This process takes place in the early secretory pathway, depends on initial N-glycosylation, and requires the REJ domain. There is evidence that cleavage at GPS region is incomplete. Uncleaved and cleaved products may have different functions in vivo.

It localises to the cell membrane. The protein localises to the cell projection. Its subcellular location is the cilium. The protein resides in the endoplasmic reticulum. It is found in the golgi apparatus. It localises to the vesicle. The protein localises to the secreted. Its subcellular location is the extracellular exosome. Its function is as follows. Component of a heteromeric calcium-permeable ion channel formed by PKD1 and PKD2 that is activated by interaction between PKD1 and a Wnt family member, such as WNT3A and WNT9B. Both PKD1 and PKD2 are required for channel activity. Involved in renal tubulogenesis. Involved in fluid-flow mechanosensation by the primary cilium in renal epithelium. Acts as a regulator of cilium length, together with PKD2. The dynamic control of cilium length is essential in the regulation of mechanotransductive signaling. The cilium length response creates a negative feedback loop whereby fluid shear-mediated deflection of the primary cilium, which decreases intracellular cAMP, leads to cilium shortening and thus decreases flow-induced signaling. May be an ion-channel regulator. Involved in adhesive protein-protein and protein-carbohydrate interactions. Likely to be involved with polycystin-1-interacting protein 1 in the detection, sequestration and exocytosis of senescent mitochondria. In Homo sapiens (Human), this protein is Polycystin-1.